Consider the following 76-residue polypeptide: Small ribosomal subunit protein bS18 (76 aa).

The protein belongs to the bacterial ribosomal protein bS18 family. In terms of assembly, part of the 30S ribosomal subunit. Forms a tight heterodimer with protein bS6.

In terms of biological role, binds as a heterodimer with protein bS6 to the central domain of the 16S rRNA, where it helps stabilize the platform of the 30S subunit. The polypeptide is Small ribosomal subunit protein bS18 (Azotobacter vinelandii (strain DJ / ATCC BAA-1303)).